The chain runs to 101 residues: Putative membrane protein insertion efficiency factor (101 aa).

This sequence belongs to the UPF0161 family.

The protein localises to the cell membrane. Its function is as follows. Could be involved in insertion of integral membrane proteins into the membrane. The chain is Putative membrane protein insertion efficiency factor from Lacticaseibacillus casei (strain BL23) (Lactobacillus casei).